The sequence spans 529 residues: Non-reducing end alpha-L-arabinofuranosidase BoGH43B (529 aa).

Positions 1-23 are cleaved as a signal peptide; sequence MMKNSCRLLLILIGLWMANVSLA. D38 acts as the Proton acceptor in catalysis. E198 functions as the Proton donor in the catalytic mechanism.

This sequence belongs to the glycosyl hydrolase 43 family.

It localises to the periplasm. The enzyme catalyses Hydrolysis of terminal non-reducing alpha-L-arabinofuranoside residues in alpha-L-arabinosides.. It functions in the pathway glucan metabolism; xyloglucan degradation. Functionally, alpha-L-arabinofuranosidase involved in xyloglucan degradation by mediating the cleavage of terminal non-reducing alpha-L-arabinofuranoside residues in xyloglucan branches, converting the 'S' units to 'X' units. The protein is Non-reducing end alpha-L-arabinofuranosidase BoGH43B of Bacteroides ovatus (strain ATCC 8483 / DSM 1896 / JCM 5824 / BCRC 10623 / CCUG 4943 / NCTC 11153).